The primary structure comprises 87 residues: MVNMKASMFLTFAGLVLLFVVCFASESEEKEFPKEMLSSIFAVDNDFKQEERDCAGYMRECKEKLCCSGYVCSSRWKRCVLPAPWRR.

The N-terminal stretch at 1 to 24 (MVNMKASMFLTFAGLVLLFVVCFA) is a signal peptide. Residues 25–52 (SESEEKEFPKEMLSSIFAVDNDFKQEER) constitute a propeptide that is removed on maturation. Cystine bridges form between Cys54/Cys67, Cys61/Cys72, and Cys66/Cys79.

Belongs to the neurotoxin 10 (Hwtx-1) family. 51 (Hntx-8) subfamily. Hntx-8 sub-subfamily. As to expression, expressed by the venom gland.

It localises to the secreted. Functionally, ion channel inhibitor. This chain is U3-theraphotoxin-Hhn1g, found in Cyriopagopus hainanus (Chinese bird spider).